The sequence spans 399 residues: Carbamoyl phosphate synthase arginine-specific small chain (399 aa).

One can recognise a Glutamine amidotransferase type-1 domain in the interval 187–379; the sequence is DVALVDCGVK…VERMRCYRKL (193 aa). Cys267 functions as the Nucleophile in the catalytic mechanism. Catalysis depends on residues His352 and Glu354.

This sequence belongs to the CarA family. As to quaternary structure, heterodimer composed of 2 chains; the small (or glutamine) chain promotes the hydrolysis of glutamine to ammonia, which is used by the large (or ammonia) chain to synthesize carbamoyl phosphate.

It is found in the cytoplasm. The catalysed reaction is hydrogencarbonate + L-glutamine + 2 ATP + H2O = carbamoyl phosphate + L-glutamate + 2 ADP + phosphate + 2 H(+). The enzyme catalyses L-glutamine + H2O = L-glutamate + NH4(+). Its pathway is amino-acid biosynthesis; L-arginine biosynthesis; carbamoyl phosphate from bicarbonate: step 1/1. In terms of biological role, small subunit of the arginine-specific carbamoyl phosphate synthase (CPSase). CPSase catalyzes the formation of carbamoyl phosphate from the ammonia moiety of glutamine, carbonate, and phosphate donated by ATP, constituting the first step of 2 biosynthetic pathways, one leading to arginine and/or urea and the other to pyrimidine nucleotides. The small subunit (glutamine amidotransferase) binds and cleaves glutamine to supply the large subunit with the substrate ammonia. In Eremothecium gossypii (strain ATCC 10895 / CBS 109.51 / FGSC 9923 / NRRL Y-1056) (Yeast), this protein is Carbamoyl phosphate synthase arginine-specific small chain (CPA1).